Here is a 96-residue protein sequence, read N- to C-terminus: Large ribosomal subunit protein uL15 (96 aa).

This sequence belongs to the universal ribosomal protein uL15 family. Part of the 50S ribosomal subunit.

Binds to the 23S rRNA. In Streptomyces scabiei, this protein is Large ribosomal subunit protein uL15 (rplO).